Reading from the N-terminus, the 466-residue chain is Asparagine--tRNA ligase (466 aa).

This sequence belongs to the class-II aminoacyl-tRNA synthetase family. In terms of assembly, homodimer.

Its subcellular location is the cytoplasm. The catalysed reaction is tRNA(Asn) + L-asparagine + ATP = L-asparaginyl-tRNA(Asn) + AMP + diphosphate + H(+). The sequence is that of Asparagine--tRNA ligase from Shewanella sp. (strain ANA-3).